Here is a 357-residue protein sequence, read N- to C-terminus: Histidinol-phosphate aminotransferase 2 (357 aa).

N6-(pyridoxal phosphate)lysine is present on lysine 216.

This sequence belongs to the class-II pyridoxal-phosphate-dependent aminotransferase family. Histidinol-phosphate aminotransferase subfamily. Homodimer. The cofactor is pyridoxal 5'-phosphate.

The enzyme catalyses L-histidinol phosphate + 2-oxoglutarate = 3-(imidazol-4-yl)-2-oxopropyl phosphate + L-glutamate. It participates in amino-acid biosynthesis; L-histidine biosynthesis; L-histidine from 5-phospho-alpha-D-ribose 1-diphosphate: step 7/9. The sequence is that of Histidinol-phosphate aminotransferase 2 from Idiomarina loihiensis (strain ATCC BAA-735 / DSM 15497 / L2-TR).